The following is a 208-amino-acid chain: Small ribosomal subunit protein uS4 (208 aa).

An S4 RNA-binding domain is found at 98–160 (CRLDNVVYRM…AKKQSRIQLA (63 aa)).

Belongs to the universal ribosomal protein uS4 family. As to quaternary structure, part of the 30S ribosomal subunit. Contacts protein S5. The interaction surface between S4 and S5 is involved in control of translational fidelity.

Functionally, one of the primary rRNA binding proteins, it binds directly to 16S rRNA where it nucleates assembly of the body of the 30S subunit. In terms of biological role, with S5 and S12 plays an important role in translational accuracy. In Ruthia magnifica subsp. Calyptogena magnifica, this protein is Small ribosomal subunit protein uS4.